We begin with the raw amino-acid sequence, 319 residues long: Acetyl-coenzyme A carboxylase carboxyl transferase subunit alpha (319 aa).

Positions 38-292 constitute a CoA carboxyltransferase C-terminal domain; sequence ALDKKAADLL…GKAIASMLAG (255 aa).

The protein belongs to the AccA family. Acetyl-CoA carboxylase is a heterohexamer composed of biotin carboxyl carrier protein (AccB), biotin carboxylase (AccC) and two subunits each of ACCase subunit alpha (AccA) and ACCase subunit beta (AccD).

It localises to the cytoplasm. It catalyses the reaction N(6)-carboxybiotinyl-L-lysyl-[protein] + acetyl-CoA = N(6)-biotinyl-L-lysyl-[protein] + malonyl-CoA. Its pathway is lipid metabolism; malonyl-CoA biosynthesis; malonyl-CoA from acetyl-CoA: step 1/1. Its function is as follows. Component of the acetyl coenzyme A carboxylase (ACC) complex. First, biotin carboxylase catalyzes the carboxylation of biotin on its carrier protein (BCCP) and then the CO(2) group is transferred by the carboxyltransferase to acetyl-CoA to form malonyl-CoA. The polypeptide is Acetyl-coenzyme A carboxylase carboxyl transferase subunit alpha (Jannaschia sp. (strain CCS1)).